Here is a 96-residue protein sequence, read N- to C-terminus: Cytochrome c oxidase assembly factor 3 homolog, mitochondrial (96 aa).

Residues 1–50 lie on the Mitochondrial matrix side of the membrane; the sequence is MSSQGEPKPEAQFAKRIDPTKEALTKEQLQFIRQVEMAQWKKKTDKLRGR. The chain crosses the membrane as a helical span at residues 51-73; that stretch reads NVATGLAIGAVVLGIYGYTFYSV. Topologically, residues 74–96 are mitochondrial intermembrane; it reads SQEKIMDEIDEEAKVRVPKTGAN.

This sequence belongs to the COA3 family. In terms of assembly, core component of the MITRAC (mitochondrial translation regulation assembly intermediate of cytochrome c oxidase complex) complex.

It localises to the mitochondrion inner membrane. In terms of biological role, core component of the MITRAC (mitochondrial translation regulation assembly intermediate of cytochrome c oxidase complex) complex, that regulates cytochrome c oxidase assembly. MITRAC complexes regulate both translation of mitochondrial encoded components and assembly of nuclear-encoded components imported in mitochondrion. Required for efficient translation of MT-CO1 and mitochondrial respiratory chain complex IV assembly. This chain is Cytochrome c oxidase assembly factor 3 homolog, mitochondrial (coa3a), found in Danio rerio (Zebrafish).